Here is a 298-residue protein sequence, read N- to C-terminus: N-acetylmuramic acid 6-phosphate etherase (298 aa).

The region spanning 54–217 (TIKAMKQGGR…STTVMIGLGK (164 aa)) is the SIS domain. Catalysis depends on Glu82, which acts as the Proton donor. Glu113 is an active-site residue.

It belongs to the GCKR-like family. MurNAc-6-P etherase subfamily. Homodimer.

The enzyme catalyses N-acetyl-D-muramate 6-phosphate + H2O = N-acetyl-D-glucosamine 6-phosphate + (R)-lactate. The protein operates within amino-sugar metabolism; N-acetylmuramate degradation. Its function is as follows. Specifically catalyzes the cleavage of the D-lactyl ether substituent of MurNAc 6-phosphate, producing GlcNAc 6-phosphate and D-lactate. In Halalkalibacterium halodurans (strain ATCC BAA-125 / DSM 18197 / FERM 7344 / JCM 9153 / C-125) (Bacillus halodurans), this protein is N-acetylmuramic acid 6-phosphate etherase.